An 84-amino-acid chain; its full sequence is Acyl carrier protein homolog (84 aa).

One can recognise a Carrier domain in the interval 4–79; the sequence is RDILLKIKEI…ELIAEVKHLI (76 aa). Position 39 is an O-(pantetheine 4'-phosphoryl)serine (serine 39).

4'-phosphopantetheine is transferred from CoA to a specific serine of the apo-ACP-like protein.

It functions in the pathway lipid metabolism; fatty acid biosynthesis. Functionally, carrier of the growing fatty acid chain in fatty acid biosynthesis. In Mycoplasma pneumoniae (strain ATCC 29342 / M129 / Subtype 1) (Mycoplasmoides pneumoniae), this protein is Acyl carrier protein homolog.